The sequence spans 225 residues: Uracil-DNA glycosylase (225 aa).

Asp-65 (proton acceptor) is an active-site residue.

It belongs to the uracil-DNA glycosylase (UDG) superfamily. UNG family.

The protein resides in the cytoplasm. The enzyme catalyses Hydrolyzes single-stranded DNA or mismatched double-stranded DNA and polynucleotides, releasing free uracil.. Excises uracil residues from the DNA which can arise as a result of misincorporation of dUMP residues by DNA polymerase or due to deamination of cytosine. The polypeptide is Uracil-DNA glycosylase (Bacillus licheniformis (strain ATCC 14580 / DSM 13 / JCM 2505 / CCUG 7422 / NBRC 12200 / NCIMB 9375 / NCTC 10341 / NRRL NRS-1264 / Gibson 46)).